The chain runs to 195 residues: dITP/XTP pyrophosphatase (195 aa).

Residue 8–13 (TNNQGK) participates in substrate binding. Mg(2+) is bound by residues Glu-39 and Asp-68. Asp-68 (proton acceptor) is an active-site residue. Substrate is bound by residues Ser-69, 149-152 (FGYD), Lys-172, and 177-178 (HR).

The protein belongs to the HAM1 NTPase family. Homodimer. The cofactor is Mg(2+).

It carries out the reaction XTP + H2O = XMP + diphosphate + H(+). The catalysed reaction is dITP + H2O = dIMP + diphosphate + H(+). The enzyme catalyses ITP + H2O = IMP + diphosphate + H(+). In terms of biological role, pyrophosphatase that catalyzes the hydrolysis of nucleoside triphosphates to their monophosphate derivatives, with a high preference for the non-canonical purine nucleotides XTP (xanthosine triphosphate), dITP (deoxyinosine triphosphate) and ITP. Seems to function as a house-cleaning enzyme that removes non-canonical purine nucleotides from the nucleotide pool, thus preventing their incorporation into DNA/RNA and avoiding chromosomal lesions. This chain is dITP/XTP pyrophosphatase, found in Staphylococcus epidermidis (strain ATCC 12228 / FDA PCI 1200).